Consider the following 321-residue polypeptide: MKKVLVTGGTGLVGKALEAVIKEQSPEDEQWFFAGSKDADLTNLAATQALFAREKPTHVIHLAAMVGGLFHNMNNNLDFLRNNLLINDNVLQTAHEQGCVKVVSCLSTCIFPDKTSYPIDETMVHNGPPHPSNYGYSYAKRLIDVQNHAYHDKYGRVYTSVIPCNIFGPHDNYNPEVSHVIPGMIYRMHQLVTEKTDVPENDKVFTVFGSGMPLRQFVYSRDLAELMIWVLRNYESVEPIILSADEVQEVTIFEVAQAVAKAFNFNGRLVCDTSKSDGQYKKTASNAKLRSFLPDYAFTDLETAINASVKWYIENYDQARK.

8–14 (GGTGLVG) provides a ligand contact to NADP(+). Tyrosine 136 acts as the Proton donor/acceptor in catalysis. NADP(+)-binding positions include lysine 140, 163-166 (PCNI), and histidine 179. Arginine 187, arginine 215, and aspartate 277 together coordinate substrate.

This sequence belongs to the NAD(P)-dependent epimerase/dehydratase family. Fucose synthase subfamily. In terms of assembly, homodimer.

The enzyme catalyses GDP-beta-L-fucose + NADP(+) = GDP-4-dehydro-alpha-D-rhamnose + NADPH + H(+). It participates in nucleotide-sugar biosynthesis; GDP-L-fucose biosynthesis via de novo pathway; GDP-L-fucose from GDP-alpha-D-mannose: step 2/2. Its function is as follows. Catalyzes the two-step NADP-dependent conversion of GDP-4-dehydro-6-deoxy-D-mannose to GDP-fucose, involving an epimerase and a reductase reaction. The protein is Probable GDP-L-fucose synthase (Gmer) of Drosophila melanogaster (Fruit fly).